The chain runs to 44 residues: Photosystem I reaction center subunit IX (44 aa).

Residues 7–27 (YLSVAPVLSTLWFGALAGLLI) traverse the membrane as a helical segment.

It belongs to the PsaJ family.

It is found in the plastid. Its subcellular location is the chloroplast thylakoid membrane. Its function is as follows. May help in the organization of the PsaE and PsaF subunits. This is Photosystem I reaction center subunit IX from Coffea arabica (Arabian coffee).